The chain runs to 448 residues: Deoxyguanosinetriphosphate triphosphohydrolase-like protein (448 aa).

The region spanning R67–G260 is the HD domain.

The protein belongs to the dGTPase family. Type 2 subfamily.

In Aliivibrio salmonicida (strain LFI1238) (Vibrio salmonicida (strain LFI1238)), this protein is Deoxyguanosinetriphosphate triphosphohydrolase-like protein.